We begin with the raw amino-acid sequence, 152 residues long: Interleukin-1 family member 10 (152 aa).

The protein belongs to the IL-1 family. Interacts with cargo receptor TMED10; the interaction mediates the translocation from the cytoplasm into the ERGIC (endoplasmic reticulum-Golgi intermediate compartment) and thereby secretion. In terms of tissue distribution, expressed in fetal skin, spleen and tonsil. Expressed mostly in the basal epithelia of skin and in proliferating B-cells of the tonsil.

It localises to the cytoplasm. It is found in the secreted. In terms of biological role, cytokine with immunomodulatory activity. Alone, does not induce cytokine production, but reduces IL22 and IL17A production by T-cells in response to heat-killed Candida albicans. Reduces IL36G-induced production of IL8 by peripheral blood mononuclear cells. Increases IL6 production by dendritic cells stimulated by bacterial lipopolysaccharides (LPS). Ligand for IL-36R/IL1RL2. The polypeptide is Interleukin-1 family member 10 (Homo sapiens (Human)).